A 98-amino-acid chain; its full sequence is Large ribosomal subunit protein uL23 (98 aa).

Belongs to the universal ribosomal protein uL23 family. As to quaternary structure, part of the 50S ribosomal subunit. Contacts protein L29, and trigger factor when it is bound to the ribosome.

Functionally, one of the early assembly proteins it binds 23S rRNA. One of the proteins that surrounds the polypeptide exit tunnel on the outside of the ribosome. Forms the main docking site for trigger factor binding to the ribosome. This chain is Large ribosomal subunit protein uL23, found in Clostridium botulinum (strain Eklund 17B / Type B).